The following is a 228-amino-acid chain: Lipoprotein-releasing system ATP-binding protein LolD (228 aa).

The 223-residue stretch at 6 to 228 (IKCINLNKSY…ENNQIFNYES (223 aa)) folds into the ABC transporter domain. Residue 42 to 49 (GKSGSGKT) participates in ATP binding.

This sequence belongs to the ABC transporter superfamily. Lipoprotein translocase (TC 3.A.1.125) family.

Its subcellular location is the cell inner membrane. In terms of biological role, usually LolD forms an ABC transporter complex with LolC and LolE involved in the translocation of lipoprotein, in an ATP-dependent manner. However, LolE is certainly not functional as it is frameshifted. This Buchnera aphidicola subsp. Acyrthosiphon pisum (strain APS) (Acyrthosiphon pisum symbiotic bacterium) protein is Lipoprotein-releasing system ATP-binding protein LolD.